The primary structure comprises 111 residues: Resistin-like gamma (111 aa).

A signal peptide spans 1 to 23; it reads MKTAICSLLICIFLLQLMVPVNT. 5 disulfides stabilise this stretch: C55–C108, C67–C107, C76–C93, C78–C95, and C82–C97.

It belongs to the resistin/FIZZ family. Homodimer. Heterodimer with RETNLB. In terms of tissue distribution, highly expressed in bone marrow, spleen and white blood cells. Also detected at low levels in thymus, lung, trachea, white adipose tissue, nasal respiratory epithelium, colon, small intestine, kidney, liver, and heart.

The protein resides in the secreted. Functionally, probable hormone. Promotes chemotaxis in myeloid cells. This Rattus norvegicus (Rat) protein is Resistin-like gamma.